Here is a 114-residue protein sequence, read N- to C-terminus: UPF0342 protein SH1117 (114 aa).

It belongs to the UPF0342 family.

The polypeptide is UPF0342 protein SH1117 (Staphylococcus haemolyticus (strain JCSC1435)).